A 290-amino-acid chain; its full sequence is MLAFTWIALRFIHFTSLMLVFGFAMYGAWLAPLTIRRLLAKRFLRLQQHAAVWSLISATAMLAVQGGLMGTGWTDVFSPNIWQAVLQTQFGGIWLWQIVLALVTLIVALMQPRNMPRLLFMLTTAQFILLAGVGHATLNEGVTAKIHQTNHAIHLICAAAWFGGLLPVLWCMQLIKGRWRHQAIQALMRFSWCGHFAVIGVLASGVLNALLITGFPPTLTTYWGQLLLLKAILVMIMVVIALANRYVLVPRMRQDEDRAAPWFVWMTKLEWAIGAVVLVIISLLATLEPF.

At 1 to 10 (MLAFTWIALR) the chain is on the periplasmic side. The helical transmembrane segment at 11–31 (FIHFTSLMLVFGFAMYGAWLA) threads the bilayer. Residues 32–49 (PLTIRRLLAKRFLRLQQH) lie on the Cytoplasmic side of the membrane. A helical membrane pass occupies residues 50-70 (AAVWSLISATAMLAVQGGLMG). Over 71–89 (TGWTDVFSPNIWQAVLQTQ) the chain is Periplasmic. The helical transmembrane segment at 90–110 (FGGIWLWQIVLALVTLIVALM) threads the bilayer. At 111–117 (QPRNMPR) the chain is on the cytoplasmic side. Residues 118–138 (LLFMLTTAQFILLAGVGHATL) traverse the membrane as a helical segment. Residues 139–151 (NEGVTAKIHQTNH) lie on the Periplasmic side of the membrane. Residues 152–172 (AIHLICAAAWFGGLLPVLWCM) traverse the membrane as a helical segment. Residues 173–195 (QLIKGRWRHQAIQALMRFSWCGH) lie on the Cytoplasmic side of the membrane. A helical membrane pass occupies residues 196-216 (FAVIGVLASGVLNALLITGFP). The Periplasmic segment spans residues 217 to 222 (PTLTTY). Residues 223–243 (WGQLLLLKAILVMIMVVIALA) form a helical membrane-spanning segment. Residues 244–260 (NRYVLVPRMRQDEDRAA) are Cytoplasmic-facing. The helical transmembrane segment at 261–281 (PWFVWMTKLEWAIGAVVLVII) threads the bilayer. The Periplasmic segment spans residues 282–290 (SLLATLEPF).

Belongs to the CopD family.

It localises to the cell inner membrane. In Escherichia coli (strain K12), this protein is Inner membrane protein YebZ (yebZ).